Reading from the N-terminus, the 314-residue chain is 1-aminocyclopropane-1-carboxylate oxidase 1 (314 aa).

The region spanning 153 to 253 (PNFGTKVSNY…RMSIASFYNP (101 aa)) is the Fe2OG dioxygenase domain. Fe cation contacts are provided by His177, Asp179, and His234.

The protein belongs to the iron/ascorbate-dependent oxidoreductase family. In terms of assembly, monomer. Requires Fe cation as cofactor.

The catalysed reaction is 1-aminocyclopropane-1-carboxylate + L-ascorbate + O2 = ethene + L-dehydroascorbate + hydrogen cyanide + CO2 + 2 H2O. It functions in the pathway alkene biosynthesis; ethylene biosynthesis via S-adenosyl-L-methionine; ethylene from S-adenosyl-L-methionine: step 2/2. The sequence is that of 1-aminocyclopropane-1-carboxylate oxidase 1 from Malus domestica (Apple).